We begin with the raw amino-acid sequence, 349 residues long: Protein-glutamate methylesterase/protein-glutamine glutaminase (349 aa).

One can recognise a Response regulatory domain in the interval 5 to 122 (RVLCVDDSAL…REGMLAYSEL (118 aa)). Asp-56 bears the 4-aspartylphosphate mark. The region spanning 152 to 344 (LLSSEKLIAI…QRMLAQISSG (193 aa)) is the CheB-type methylesterase domain. Residues Ser-164, His-190, and Asp-286 contribute to the active site.

This sequence belongs to the CheB family. Post-translationally, phosphorylated by CheA. Phosphorylation of the N-terminal regulatory domain activates the methylesterase activity.

Its subcellular location is the cytoplasm. The catalysed reaction is [protein]-L-glutamate 5-O-methyl ester + H2O = L-glutamyl-[protein] + methanol + H(+). The enzyme catalyses L-glutaminyl-[protein] + H2O = L-glutamyl-[protein] + NH4(+). In terms of biological role, involved in chemotaxis. Part of a chemotaxis signal transduction system that modulates chemotaxis in response to various stimuli. Catalyzes the demethylation of specific methylglutamate residues introduced into the chemoreceptors (methyl-accepting chemotaxis proteins or MCP) by CheR. Also mediates the irreversible deamidation of specific glutamine residues to glutamic acid. In Yersinia pestis bv. Antiqua (strain Antiqua), this protein is Protein-glutamate methylesterase/protein-glutamine glutaminase.